Reading from the N-terminus, the 110-residue chain is Small ubiquitin-related modifier 3 (110 aa).

Glycyl lysine isopeptide (Lys-Gly) (interchain with G-Cter in SUMO2) cross-links involve residues Lys5 and Lys7. Residue Lys11 forms a Glycyl lysine isopeptide (Lys-Gly) (interchain with G-Cter in SUMO); alternate linkage. Lys11 participates in a covalent cross-link: Glycyl lysine isopeptide (Lys-Gly) (interchain with G-Cter in SUMO2); alternate. The Ubiquitin-like domain occupies 15 to 92 (DHINLKVAGQ…IDVFQQQTGG (78 aa)). Residues 88-101 (QQTGGSASRGSVPT) show a composition bias toward polar residues. The tract at residues 88 to 110 (QQTGGSASRGSVPTPNRCPDLCY) is disordered. Gly92 participates in a covalent cross-link: Glycyl lysine isopeptide (Gly-Lys) (interchain with K-? in acceptor proteins). A propeptide spanning residues 93 to 110 (SASRGSVPTPNRCPDLCY) is cleaved from the precursor.

This sequence belongs to the ubiquitin family. SUMO subfamily. Interacts with SAE2 and UBE2I. Covalently attached to a number of proteins. Interacts with USP25 (via ts SIM domain); the interaction sumoylates USP25 and inhibits its ubiquitin hydrolyzing activity. Interacts with BMAL1. Post-translationally, polymeric chains can be formed through Lys-11 cross-linking. In terms of processing, cleavage of precursor form by SENP1, SENP2 or SENP5 is necessary for function.

Its subcellular location is the cytoplasm. The protein resides in the nucleus. It is found in the PML body. In terms of biological role, ubiquitin-like protein which can be covalently attached to target lysines either as a monomer or as a lysine-linked polymer. Does not seem to be involved in protein degradation and may function as an antagonist of ubiquitin in the degradation process. Plays a role in a number of cellular processes such as nuclear transport, DNA replication and repair, mitosis and signal transduction. Covalent attachment to its substrates requires prior activation by the E1 complex SAE1-SAE2 and linkage to the E2 enzyme UBE2I, and can be promoted by an E3 ligase such as PIAS1-4, RANBP2 or CBX4. Plays a role in the regulation of sumoylation status of SETX. The polypeptide is Small ubiquitin-related modifier 3 (Mus musculus (Mouse)).